A 338-amino-acid chain; its full sequence is Glycerol-3-phosphate dehydrogenase [NAD(P)+] (338 aa).

Residues Ser11, Trp12, His32, His33, and Lys109 each contribute to the NADPH site. Residues Lys109, Gly140, and Ser142 each contribute to the sn-glycerol 3-phosphate site. Ala144 is an NADPH binding site. Lys195, Asp248, Ser258, Arg259, and Asn260 together coordinate sn-glycerol 3-phosphate. The active-site Proton acceptor is Lys195. Residue Arg259 coordinates NADPH. NADPH-binding residues include Val283 and Glu285.

It belongs to the NAD-dependent glycerol-3-phosphate dehydrogenase family.

It localises to the cytoplasm. The catalysed reaction is sn-glycerol 3-phosphate + NAD(+) = dihydroxyacetone phosphate + NADH + H(+). It carries out the reaction sn-glycerol 3-phosphate + NADP(+) = dihydroxyacetone phosphate + NADPH + H(+). It participates in membrane lipid metabolism; glycerophospholipid metabolism. Its function is as follows. Catalyzes the reduction of the glycolytic intermediate dihydroxyacetone phosphate (DHAP) to sn-glycerol 3-phosphate (G3P), the key precursor for phospholipid synthesis. This is Glycerol-3-phosphate dehydrogenase [NAD(P)+] from Leuconostoc citreum (strain KM20).